Consider the following 141-residue polypeptide: Putative nickel-responsive regulator (141 aa).

4 residues coordinate Ni(2+): His-83, His-94, His-96, and Cys-102.

The protein belongs to the transcriptional regulatory CopG/NikR family. Ni(2+) is required as a cofactor.

Functionally, transcriptional regulator. This is Putative nickel-responsive regulator from Methanopyrus kandleri (strain AV19 / DSM 6324 / JCM 9639 / NBRC 100938).